A 450-amino-acid chain; its full sequence is C4-dicarboxylate transport protein (450 aa).

9 consecutive transmembrane segments (helical) span residues S10–P30, L46–M66, Y78–V98, I143–G163, I190–I210, L224–A244, V291–L311, I332–G352, and I354–I374. Residues P428 to V450 form a disordered region.

This sequence belongs to the dicarboxylate/amino acid:cation symporter (DAACS) (TC 2.A.23) family.

It localises to the cell inner membrane. Responsible for the transport of dicarboxylates such as succinate, fumarate, and malate from the periplasm across the membrane. This chain is C4-dicarboxylate transport protein, found in Pseudomonas syringae pv. syringae (strain B728a).